We begin with the raw amino-acid sequence, 147 residues long: Leghemoglobin (147 aa).

Residues 2–147 form the Globin domain; that stretch reads GFTADQEALV…LASAIKKAMS (146 aa). Residues Y25 and Y30 each carry the nitrated tyrosine modification. S45 serves as a coordination point for heme b. At S45 the chain carries Phosphoserine. H62 provides a ligand contact to O2. Residues K65, H94, and K97 each contribute to the heme b site. Y135 is subject to Nitrated tyrosine.

It belongs to the plant globin family. In terms of assembly, monomer. Nitrated in effective nodules and particularly in hypoxic conditions; this mechanism may play a protective role in the symbiosis by buffering toxic peroxynitrite NO(2)(-). Nitration level decrease during nodule senescence. Post-translationally, phosphorylation at Ser-45 disrupts the molecular environment of its porphyrin ring oxygen binding pocket, thus leading to a reduced oxygen consumption and to the delivery of oxygen O(2) to symbiosomes. Root nodules.

The protein localises to the cytoplasm. Its subcellular location is the cytosol. The protein resides in the nucleus. Its function is as follows. Leghemoglobin that reversibly binds oxygen O(2) through a pentacoordinated heme iron. In root nodules, facilitates the diffusion of oxygen to the bacteroids while preventing the bacterial nitrogenase from being inactivated by buffering dioxygen, nitric oxide and carbon monoxide, and promoting the formation of reactive oxygen species (ROS, e.g. H(2)O(2)). This role is essential for symbiotic nitrogen fixation (SNF). This is Leghemoglobin (LB3) from Medicago sativa (Alfalfa).